Reading from the N-terminus, the 420-residue chain is 3-oxo-tetronate kinase (420 aa).

ATP-binding positions include Ser258, 360 to 363 (GGET), and Gly403.

It belongs to the four-carbon acid sugar kinase family.

It carries out the reaction 3-dehydro-L-erythronate + ATP = 3-dehydro-4-O-phospho-L-erythronate + ADP + H(+). It catalyses the reaction 3-dehydro-D-erythronate + ATP = 3-dehydro-4-O-phospho-D-erythronate + ADP + H(+). Functionally, catalyzes the ATP-dependent phosphorylation of 3-oxo-tetronate to 3-oxo-tetronate 4-phosphate. In Salmonella typhimurium (strain LT2 / SGSC1412 / ATCC 700720), this protein is 3-oxo-tetronate kinase.